We begin with the raw amino-acid sequence, 253 residues long: uncharacterized protein (253 aa).

The first 19 residues, 1-19 (MHYLKKVTIYISLLILVSG), serve as a signal peptide directing secretion. C20 carries the N-palmitoyl cysteine lipid modification. C20 carries the S-diacylglycerol cysteine lipid modification.

It belongs to the staphylococcal tandem lipoprotein family.

The protein resides in the cell membrane. This is an uncharacterized protein from Staphylococcus epidermidis (strain ATCC 35984 / DSM 28319 / BCRC 17069 / CCUG 31568 / BM 3577 / RP62A).